The sequence spans 915 residues: Transferrin-binding protein A (915 aa).

The first 24 residues, 1–24, serve as a signal peptide directing secretion; it reads MQQQHLFRLNILCLSLMTALPAYA. A TonB box motif is present at residues 38–45; it reads DTIQVKAK. Positions 51 to 176 constitute a TBDR plug domain; sequence RDNEVTGLGK…LAGSVAFQTK (126 aa). The TBDR beta-barrel domain occupies 187–915; sequence QWGIQSKTAY…NYTFSLEMKF (729 aa). Over residues 526–540 the composition is skewed to polar residues; sequence LKTPPQNNGKKTSPN. The tract at residues 526–545 is disordered; the sequence is LKTPPQNNGKKTSPNGREKN. Positions 898–915 match the TonB C-terminal box motif; sequence NRYAAPGRNYTFSLEMKF.

Belongs to the TonB-dependent receptor family. Binds both human apo- and holo-transferrin (TF), via the TF C-terminus. Forms a large complex with TF and TbpB.

It localises to the cell outer membrane. In terms of biological role, neisseria acquires iron by extracting it from serum transferrin (TF) in its human host. Acts as a TF receptor and is required for TF utilization. Binds both apo- and holo-TF, via the TF C-terminus. The chain is Transferrin-binding protein A from Neisseria gonorrhoeae.